The primary structure comprises 196 residues: MIGIYIAALVLGYLFGSIPFGLILTRIAGTEDLRSIGSGNIGATNVLRTGRKGLAAATLLLDALKGTAAVLIAAGFGGAEAAMLAALGAFLGHLFPVWLKFKGGKGVAVYIGVLLGLFWPAALVFCVLWLATAYTTRYSSLSALVAAFITPIFLWWFGHPTMASLFAVLTLLLFWMHRDNIKRLQSGTESRIGEKK.

4 consecutive transmembrane segments (helical) span residues 4-24 (IYIAALVLGYLFGSIPFGLIL), 70-90 (VLIAAGFGGAEAAMLAALGAF), 111-131 (IGVLLGLFWPAALVFCVLWLA), and 152-172 (IFLWWFGHPTMASLFAVLTLL).

Belongs to the PlsY family. As to quaternary structure, probably interacts with PlsX.

It is found in the cell inner membrane. It catalyses the reaction an acyl phosphate + sn-glycerol 3-phosphate = a 1-acyl-sn-glycero-3-phosphate + phosphate. Its pathway is lipid metabolism; phospholipid metabolism. Its function is as follows. Catalyzes the transfer of an acyl group from acyl-phosphate (acyl-PO(4)) to glycerol-3-phosphate (G3P) to form lysophosphatidic acid (LPA). This enzyme utilizes acyl-phosphate as fatty acyl donor, but not acyl-CoA or acyl-ACP. The sequence is that of Glycerol-3-phosphate acyltransferase from Rhodopseudomonas palustris (strain BisB5).